A 463-amino-acid polypeptide reads, in one-letter code: SCF E3 ubiquitin ligase complex F-box protein pof2 (463 aa).

An F-box domain is found at methionine 1 to valine 42. 10 LRR repeats span residues cysteine 145–arginine 170, cysteine 171–lysine 196, aspartate 198–valine 220, glycine 225–asparagine 247, glutamate 249–leucine 271, lysine 278–threonine 299, serine 304–lysine 326, cysteine 328–leucine 353, proline 354–serine 378, and serine 380–asparagine 405.

In terms of assembly, part of a SCF E3 ubiquitin ligase complex. Interacts with skp1.

The protein resides in the mitochondrion. Involved in substrate recognition in ubiquitin-dependent degradation. The sequence is that of SCF E3 ubiquitin ligase complex F-box protein pof2 (pof2) from Schizosaccharomyces pombe (strain 972 / ATCC 24843) (Fission yeast).